Reading from the N-terminus, the 202-residue chain is Adapter protein MecA 2 (202 aa).

This sequence belongs to the MecA family. As to quaternary structure, homodimer.

Functionally, enables the recognition and targeting of unfolded and aggregated proteins to the ClpC protease or to other proteins involved in proteolysis. Acts negatively in the development of competence by binding ComK and recruiting it to the ClpCP protease. When overexpressed, inhibits sporulation. Also involved in Spx degradation by ClpC. This Bacillus anthracis protein is Adapter protein MecA 2 (mecA2).